The sequence spans 339 residues: Glutamyl-tRNA reductase (339 aa).

Residues 50-53 (TCHR), Ser102, 107-109 (ETE), and Gln113 each bind substrate. Cys51 functions as the Nucleophile in the catalytic mechanism. Residue 181 to 186 (GYSDIN) participates in NADP(+) binding.

This sequence belongs to the glutamyl-tRNA reductase family. Homodimer.

The catalysed reaction is (S)-4-amino-5-oxopentanoate + tRNA(Glu) + NADP(+) = L-glutamyl-tRNA(Glu) + NADPH + H(+). Its pathway is porphyrin-containing compound metabolism; protoporphyrin-IX biosynthesis; 5-aminolevulinate from L-glutamyl-tRNA(Glu): step 1/2. Catalyzes the NADPH-dependent reduction of glutamyl-tRNA(Glu) to glutamate 1-semialdehyde (GSA). This is Glutamyl-tRNA reductase from Chlamydia pneumoniae (Chlamydophila pneumoniae).